Here is a 249-residue protein sequence, read N- to C-terminus: Elongator complex protein 6 homolog (249 aa).

This sequence belongs to the ELP6 family. As to quaternary structure, component of the elongator complex.

Its subcellular location is the cytoplasm. The protein resides in the nucleus. It participates in tRNA modification; 5-methoxycarbonylmethyl-2-thiouridine-tRNA biosynthesis. Component of the elongator complex which is required for multiple tRNA modifications, including mcm5U (5-methoxycarbonylmethyl uridine), mcm5s2U (5-methoxycarbonylmethyl-2-thiouridine), and ncm5U (5-carbamoylmethyl uridine). The elongator complex catalyzes formation of carboxymethyluridine in the wobble base at position 34 in tRNAs. This Schizosaccharomyces pombe (strain 972 / ATCC 24843) (Fission yeast) protein is Elongator complex protein 6 homolog.